We begin with the raw amino-acid sequence, 566 residues long: Glutamate--tRNA ligase (566 aa).

Residues Pro-105–Asn-115 carry the 'HIGH' region motif.

It belongs to the class-I aminoacyl-tRNA synthetase family. Glutamate--tRNA ligase type 2 subfamily.

The protein localises to the cytoplasm. The enzyme catalyses tRNA(Glu) + L-glutamate + ATP = L-glutamyl-tRNA(Glu) + AMP + diphosphate. In terms of biological role, catalyzes the attachment of glutamate to tRNA(Glu) in a two-step reaction: glutamate is first activated by ATP to form Glu-AMP and then transferred to the acceptor end of tRNA(Glu). This Sulfurisphaera tokodaii (strain DSM 16993 / JCM 10545 / NBRC 100140 / 7) (Sulfolobus tokodaii) protein is Glutamate--tRNA ligase.